A 429-amino-acid chain; its full sequence is UDP-N-acetylglucosamine 1-carboxyvinyltransferase (429 aa).

Residue 22 to 23 participates in phosphoenolpyruvate binding; it reads KN. Arg-93 contributes to the UDP-N-acetyl-alpha-D-glucosamine binding site. Cys-117 acts as the Proton donor in catalysis. 2-(S-cysteinyl)pyruvic acid O-phosphothioketal is present on Cys-117. UDP-N-acetyl-alpha-D-glucosamine-binding positions include 122–126, Asp-307, and Val-329; that span reads RPVDL.

This sequence belongs to the EPSP synthase family. MurA subfamily.

The protein localises to the cytoplasm. It carries out the reaction phosphoenolpyruvate + UDP-N-acetyl-alpha-D-glucosamine = UDP-N-acetyl-3-O-(1-carboxyvinyl)-alpha-D-glucosamine + phosphate. It participates in cell wall biogenesis; peptidoglycan biosynthesis. In terms of biological role, cell wall formation. Adds enolpyruvyl to UDP-N-acetylglucosamine. In Chloroherpeton thalassium (strain ATCC 35110 / GB-78), this protein is UDP-N-acetylglucosamine 1-carboxyvinyltransferase.